We begin with the raw amino-acid sequence, 31 residues long: Cytochrome b6-f complex subunit 6 (31 aa).

The chain crosses the membrane as a helical span at residues 4–24; the sequence is LISYISLLAGFVIIASVFYLA.

Belongs to the PetL family. In terms of assembly, the 4 large subunits of the cytochrome b6-f complex are cytochrome b6, subunit IV (17 kDa polypeptide, PetD), cytochrome f and the Rieske protein, while the 4 small subunits are PetG, PetL, PetM and PetN. The complex functions as a dimer.

The protein resides in the plastid. It localises to the chloroplast thylakoid membrane. Its function is as follows. Component of the cytochrome b6-f complex, which mediates electron transfer between photosystem II (PSII) and photosystem I (PSI), cyclic electron flow around PSI, and state transitions. PetL is important for photoautotrophic growth as well as for electron transfer efficiency and stability of the cytochrome b6-f complex. In Tupiella akineta (Green alga), this protein is Cytochrome b6-f complex subunit 6.